The following is a 161-amino-acid chain: Ribosomal RNA large subunit methyltransferase H (161 aa).

Residues Leu-78, Gly-110, and 129-134 (LSRLTF) each bind S-adenosyl-L-methionine.

This sequence belongs to the RNA methyltransferase RlmH family. As to quaternary structure, homodimer.

It localises to the cytoplasm. The catalysed reaction is pseudouridine(1915) in 23S rRNA + S-adenosyl-L-methionine = N(3)-methylpseudouridine(1915) in 23S rRNA + S-adenosyl-L-homocysteine + H(+). In terms of biological role, specifically methylates the pseudouridine at position 1915 (m3Psi1915) in 23S rRNA. The polypeptide is Ribosomal RNA large subunit methyltransferase H (Heliobacterium modesticaldum (strain ATCC 51547 / Ice1)).